Reading from the N-terminus, the 173-residue chain is NADH-ubiquinone oxidoreductase chain 6 (173 aa).

The next 5 membrane-spanning stretches (helical) occupy residues 1–21 (MTYF…AVAS), 27–47 (YGVV…LSLG), 48–68 (VSFV…VVFV), 87–107 (VVGY…VGGF), and 139–159 (CGVG…FVVL).

It belongs to the complex I subunit 6 family.

The protein localises to the mitochondrion membrane. It catalyses the reaction a ubiquinone + NADH + 5 H(+)(in) = a ubiquinol + NAD(+) + 4 H(+)(out). Functionally, core subunit of the mitochondrial membrane respiratory chain NADH dehydrogenase (Complex I) that is believed to belong to the minimal assembly required for catalysis. Complex I functions in the transfer of electrons from NADH to the respiratory chain. The immediate electron acceptor for the enzyme is believed to be ubiquinone. The polypeptide is NADH-ubiquinone oxidoreductase chain 6 (MT-ND6) (Aethia cristatella (Crested auklet)).